The primary structure comprises 98 residues: NADH-ubiquinone oxidoreductase chain 4L (98 aa).

3 helical membrane-spanning segments follow: residues 1–21 (MSMVYVNISLAFTLSLMGLLM), 29–49 (SLLCLEGMMLSLFVMMSITIM), and 61–81 (IILLVFAACEAALGLSLLVMI).

This sequence belongs to the complex I subunit 4L family. As to quaternary structure, core subunit of respiratory chain NADH dehydrogenase (Complex I) which is composed of 45 different subunits.

It is found in the mitochondrion inner membrane. It carries out the reaction a ubiquinone + NADH + 5 H(+)(in) = a ubiquinol + NAD(+) + 4 H(+)(out). Its function is as follows. Core subunit of the mitochondrial membrane respiratory chain NADH dehydrogenase (Complex I) which catalyzes electron transfer from NADH through the respiratory chain, using ubiquinone as an electron acceptor. Part of the enzyme membrane arm which is embedded in the lipid bilayer and involved in proton translocation. This Procyon lotor (Raccoon) protein is NADH-ubiquinone oxidoreductase chain 4L (MT-ND4L).